A 397-amino-acid polypeptide reads, in one-letter code: Chorismate synthase (397 aa).

NADP(+) is bound by residues Arg-40 and Arg-46. FMN contacts are provided by residues 129–131 (RSS), 257–258 (QA), Gly-302, 317–321 (KPISS), and Arg-343.

It belongs to the chorismate synthase family. In terms of assembly, homotetramer. It depends on FMNH2 as a cofactor.

The enzyme catalyses 5-O-(1-carboxyvinyl)-3-phosphoshikimate = chorismate + phosphate. Its pathway is metabolic intermediate biosynthesis; chorismate biosynthesis; chorismate from D-erythrose 4-phosphate and phosphoenolpyruvate: step 7/7. Its function is as follows. Catalyzes the anti-1,4-elimination of the C-3 phosphate and the C-6 proR hydrogen from 5-enolpyruvylshikimate-3-phosphate (EPSP) to yield chorismate, which is the branch point compound that serves as the starting substrate for the three terminal pathways of aromatic amino acid biosynthesis. This reaction introduces a second double bond into the aromatic ring system. This chain is Chorismate synthase, found in Chlorobium luteolum (strain DSM 273 / BCRC 81028 / 2530) (Pelodictyon luteolum).